An 87-amino-acid polypeptide reads, in one-letter code: RNA-binding protein Hfq (87 aa).

A Sm domain is found at 9–68 (DPFLNALRRERIPVSIYLVNGIKLQGQIESFDQFVILLKNTVNQMVYKHAISTVVPARPV). The interval 65 to 87 (ARPVSHHSGDRPQGDRPQEKSED) is disordered. Positions 71–87 (HSGDRPQGDRPQEKSED) are enriched in basic and acidic residues.

The protein belongs to the Hfq family. As to quaternary structure, homohexamer.

Functionally, RNA chaperone that binds small regulatory RNA (sRNAs) and mRNAs to facilitate mRNA translational regulation in response to envelope stress, environmental stress and changes in metabolite concentrations. Also binds with high specificity to tRNAs. The polypeptide is RNA-binding protein Hfq (Vibrio parahaemolyticus serotype O3:K6 (strain RIMD 2210633)).